The primary structure comprises 196 residues: Probable GTP-binding protein EngB (196 aa).

The 173-residue stretch at 24–196 folds into the EngB-type G domain; the sequence is ELSEVALSGR…IWNLIEPYIS (173 aa). Residues 32-39, 59-63, 77-80, 144-147, and 176-178 each bind GTP; these read GRSNVGKS, GKTQT, DVPG, TKED, and YSS. Residues serine 39 and threonine 61 each coordinate Mg(2+).

Belongs to the TRAFAC class TrmE-Era-EngA-EngB-Septin-like GTPase superfamily. EngB GTPase family. Mg(2+) is required as a cofactor.

In terms of biological role, necessary for normal cell division and for the maintenance of normal septation. The sequence is that of Probable GTP-binding protein EngB from Staphylococcus aureus (strain MRSA252).